Here is a 431-residue protein sequence, read N- to C-terminus: Pyroglutamylated RF-amide peptide receptor (431 aa).

Residues 1–46 (MQALNITPEQFSRLLRDHNLTREQFIALYRLRPLVYTPELPGRAKL) lie on the Extracellular side of the membrane. N-linked (GlcNAc...) asparagine glycosylation occurs at N19. Residues 47–67 (ALVLTGVLIFALALFGNALVF) traverse the membrane as a helical segment. The Cytoplasmic segment spans residues 68–81 (YVVTRSKAMRTVTN). Residues 82-102 (IFICSLALSDLLITFFCIPVT) traverse the membrane as a helical segment. The Extracellular portion of the chain corresponds to 103–120 (MLQNISDNWLGGAFICKM). Residues 121–141 (VPFVQSTAVVTEILTMTCIAV) traverse the membrane as a helical segment. The Cytoplasmic segment spans residues 142-162 (ERHQGLVHPFKMKWQYTNRRA). A helical transmembrane segment spans residues 163–183 (FTMLGVVWLVAVIVGSPMWHV). At 184-212 (QQLEIKYDFLYEKEHICCLEEWTSPVHQK) the chain is on the extracellular side. Residues 213 to 233 (IYTTFILVILFLLPLMVMLIL) form a helical membrane-spanning segment. Residues 234–271 (YSKIGYELWIKKRVGDGSVLRTIHGKEMSKIARKKKRA) lie on the Cytoplasmic side of the membrane. Residues 272–292 (VIMMVTVVALFAVCWAPFHVV) form a helical membrane-spanning segment. The Extracellular segment spans residues 293–311 (HMMIEYSNFEKEYDDVTIK). The helical transmembrane segment at 312-332 (MIFAIVQIIGFSNSICNPIVY) threads the bilayer. Topologically, residues 333-431 (AFMNENFKKN…AENSPLDSGH (99 aa)) are cytoplasmic.

Belongs to the G-protein coupled receptor 1 family. As to expression, expressed widely in the brain with high levels in the hypothalamus, trigeminal ganglia and vestibular neurons, and moderate levels in the amygdala, cortex, pituitary, hippocampus, thalamus, caudate nucleus and medulla oblongata. In peripheral tissues, expressed at high levels in the retina and at moderate levels in the heart, kidney, testis and thyroid.

It localises to the cell membrane. In terms of biological role, receptor for the orexigenic neuropeptide QRFP. The activity of this receptor is mediated by G proteins that modulate adenylate cyclase activity and intracellular calcium levels. The chain is Pyroglutamylated RF-amide peptide receptor (QRFPR) from Homo sapiens (Human).